A 377-amino-acid polypeptide reads, in one-letter code: MSNGIVIIGSGFAARQLVKNIRKQDASIPLTLIAADSMDEYNKPDLSHVISQGQRADDLTRQTAGEFAEQFNLRLFPHTWVTDIDAEAHVVKSQNNQWQYDKLVLATGASAFVPPVPGRELMLTLNSQQEYRACETQLRDARRVLIVGGGLIGSELAMDFCRAGKAVTLIDNAASILASLMPPEVSSRLQHRLTEMGVHLLLKSQLQGLEKTDSGILATLDRQRCIEVDAVIAATGLRPETALARRAGLTINRGVCVDSYLQTSNADIYALGDCAEINGQVLPFLQPIQLSAMVLAKNLLGNNTPLKLPAMLVKIKTPELPLHLAGETQRQDLRWQINTERQGMVARGVDDADQLRAFVVSEDRMKEAFGLLKTLSM.

This sequence belongs to the FAD-dependent oxidoreductase family. Requires FAD as cofactor.

The protein resides in the cytoplasm. The enzyme catalyses 2 reduced [nitric oxide reductase rubredoxin domain] + NAD(+) + H(+) = 2 oxidized [nitric oxide reductase rubredoxin domain] + NADH. It functions in the pathway nitrogen metabolism; nitric oxide reduction. In terms of biological role, one of at least two accessory proteins for anaerobic nitric oxide (NO) reductase. Reduces the rubredoxin moiety of NO reductase. This is Nitric oxide reductase FlRd-NAD(+) reductase from Escherichia coli O45:K1 (strain S88 / ExPEC).